A 165-amino-acid polypeptide reads, in one-letter code: Large ribosomal subunit protein uL10 (165 aa).

It belongs to the universal ribosomal protein uL10 family. Part of the ribosomal stalk of the 50S ribosomal subunit. The N-terminus interacts with L11 and the large rRNA to form the base of the stalk. The C-terminus forms an elongated spine to which L12 dimers bind in a sequential fashion forming a multimeric L10(L12)X complex.

Forms part of the ribosomal stalk, playing a central role in the interaction of the ribosome with GTP-bound translation factors. The chain is Large ribosomal subunit protein uL10 from Mycoplasmopsis synoviae (strain 53) (Mycoplasma synoviae).